Reading from the N-terminus, the 135-residue chain is ATP synthase epsilon chain (135 aa).

Residues 90–103 (DVRRAESAKERAES) are compositionally biased toward basic and acidic residues. Residues 90-115 (DVRRAESAKERAESHLNNNDEDTDIN) form a disordered region.

The protein belongs to the ATPase epsilon chain family. As to quaternary structure, F-type ATPases have 2 components, CF(1) - the catalytic core - and CF(0) - the membrane proton channel. CF(1) has five subunits: alpha(3), beta(3), gamma(1), delta(1), epsilon(1). CF(0) has three main subunits: a, b and c.

It localises to the cell membrane. Its function is as follows. Produces ATP from ADP in the presence of a proton gradient across the membrane. In Staphylococcus carnosus (strain TM300), this protein is ATP synthase epsilon chain.